We begin with the raw amino-acid sequence, 312 residues long: Acetaldehyde dehydrogenase 4 (312 aa).

12-15 is an NAD(+) binding site; the sequence is SGNI. C132 acts as the Acyl-thioester intermediate in catalysis. NAD(+)-binding positions include 163-171 and N290; that span reads SAGPGTRAN.

The protein belongs to the acetaldehyde dehydrogenase family.

It catalyses the reaction acetaldehyde + NAD(+) + CoA = acetyl-CoA + NADH + H(+). The sequence is that of Acetaldehyde dehydrogenase 4 from Azotobacter vinelandii (strain DJ / ATCC BAA-1303).